Here is a 207-residue protein sequence, read N- to C-terminus: Glycerol-3-phosphate acyltransferase (207 aa).

6 helical membrane passes run 7-27 (YALAAVAGYLSGSIPFGLVIV), 58-78 (LATFLLDSLKAGLVALAFTLL), 83-103 (VGFVAGFAAFIGHCYPVWLGF), 116-136 (LAFVSPLHGLVVAAPVWLGLF), 141-161 (ISSLAALTAAVAVPPGAWLMG), and 166-186 (LILAGLALLSVFVFWTHRENI).

It belongs to the PlsY family. In terms of assembly, probably interacts with PlsX.

Its subcellular location is the cell inner membrane. It carries out the reaction an acyl phosphate + sn-glycerol 3-phosphate = a 1-acyl-sn-glycero-3-phosphate + phosphate. The protein operates within lipid metabolism; phospholipid metabolism. Functionally, catalyzes the transfer of an acyl group from acyl-phosphate (acyl-PO(4)) to glycerol-3-phosphate (G3P) to form lysophosphatidic acid (LPA). This enzyme utilizes acyl-phosphate as fatty acyl donor, but not acyl-CoA or acyl-ACP. This is Glycerol-3-phosphate acyltransferase from Hyphomonas neptunium (strain ATCC 15444).